A 2571-amino-acid chain; its full sequence is Highly reducing polyketide synthase 19 (2571 aa).

The segment at 1 to 51 (MSPIFLGDSEDAATCRCGPPSSPSPELSGTETALTSDSDGPELLNPGPQGP) is disordered. Residues 27-38 (LSGTETALTSDS) show a composition bias toward polar residues. Residues 51-485 (PEPIAIIGMG…GANAHCILES (435 aa)) form the Ketosynthase family 3 (KS3) domain. Catalysis depends on for beta-ketoacyl synthase activity residues cysteine 224, histidine 359, and histidine 398. The segment at 609–932 (VFTGQGAQWA…PYNSALLRGK (324 aa)) is malonyl-CoA:ACP transacylase (MAT) domain. Serine 701 serves as the catalytic For malonyltransferase activity. The segment at 1019–1163 (HDLLGSRVPG…GLVKLTQNED (145 aa)) is N-terminal hotdog fold. Positions 1019 to 1340 (HDLLGSRVPG…SGCRMVPYSS (322 aa)) are dehydratase (DH) domain. Residues 1019 to 1344 (HDLLGSRVPG…MVPYSSGTAV (326 aa)) enclose the PKS/mFAS DH domain. Catalysis depends on histidine 1051, which acts as the Proton acceptor; for dehydratase activity. Residues 1177–1344 (MEQSAPRTWY…MVPYSSGTAV (168 aa)) are C-terminal hotdog fold. Aspartate 1241 serves as the catalytic Proton donor; for dehydratase activity. The tract at residues 1800-2140 (NMSDAFVFTR…AFRALSGSTT (341 aa)) is enoyl reductase (ER) domain. Positions 2177 to 2355 (SYLLVGCLGG…ATSVGLGMIS (179 aa)) are ketoreductase (KR) domain. Residues 2490–2568 (AVAAQALELV…MLSELIAGKL (79 aa)) enclose the Carrier domain. Residue serine 2527 is modified to O-(pantetheine 4'-phosphoryl)serine.

Its pathway is polyketide biosynthesis. In terms of biological role, highly reducing polyketide synthase; part of the gene cluster that mediates the biosynthesis of pyriculol and pyriculariol, two heptaketides that induce lesion formation upon application on rice leaves but are dispensable for pathogenicity. The highly reducing polyketide synthase synthesizes the heptaketide backbone of pyriculol and pyriculariol. Pyriculol and pyriculariol contain several hydroxyl moieties and double bonds, so it can be assumed that several reduction steps occur during biosynthesis. These reactions could be executed by PKS19 itself or partly by the tailoring enzymes OXR1, PXR2, RED1, RED2 or RED3, identified within the cluster. The FAD-linked oxidoreductase OXR1 is the only tailoring enzyme for which the function has been determined yet, and is involved in the oxidation of dihydropyriculol and dihydropyriculariol into pyriculol and pyriculariol, respectively. The sequence is that of Highly reducing polyketide synthase 19 from Pyricularia oryzae (strain 70-15 / ATCC MYA-4617 / FGSC 8958) (Rice blast fungus).